The following is a 213-amino-acid chain: 3-isopropylmalate dehydratase small subunit (213 aa).

Belongs to the LeuD family. LeuD type 1 subfamily. As to quaternary structure, heterodimer of LeuC and LeuD.

The enzyme catalyses (2R,3S)-3-isopropylmalate = (2S)-2-isopropylmalate. It functions in the pathway amino-acid biosynthesis; L-leucine biosynthesis; L-leucine from 3-methyl-2-oxobutanoate: step 2/4. Its function is as follows. Catalyzes the isomerization between 2-isopropylmalate and 3-isopropylmalate, via the formation of 2-isopropylmaleate. The protein is 3-isopropylmalate dehydratase small subunit of Neisseria meningitidis serogroup C / serotype 2a (strain ATCC 700532 / DSM 15464 / FAM18).